Here is a 181-residue protein sequence, read N- to C-terminus: ADP-ribosylation factor 1 (181 aa).

Glycine 2 is lipidated: N-myristoyl glycine. GTP is bound by residues 24 to 31 (GLDAAGKT), 126 to 129 (NKQD), and alanine 160.

Belongs to the small GTPase superfamily. Arf family. In terms of assembly, may interact with GTPase RAB5b.

The protein resides in the golgi apparatus membrane. It catalyses the reaction GTP + H2O = GDP + phosphate + H(+). Alternates between an inactive GDP-bound form and an active GTP-bound form. Intrinsic GTPase activity is almost undetectable in vitro. Activated by a guanine nucleotide-exchange factor (GEF) and inactivated by GTPase-activating protein ARFGAP1. In terms of biological role, small GTPase involved in protein trafficking between different compartments. Modulates vesicle budding and uncoating within the Golgi complex. In its GTP-bound form, triggers the recruitment of coatomer proteins to the Golgi membrane. The hydrolysis of ARF1-bound GTP, which is mediated by ARFGAPs proteins, is required for dissociation of coat proteins from Golgi membranes and vesicles. Regulates the transport of N-acylated AK2 to the parasitophorous vacuole membrane. May be involved in the activation of lipid kinase PIP5K. The chain is ADP-ribosylation factor 1 (ARF1) from Plasmodium falciparum (isolate NF54).